The sequence spans 206 residues: Max dimerization protein 3 (206 aa).

Positions 8 to 25 are interaction with SIN3A and SIN3B; that stretch reads IQVLLQAAEFLERREREA. Disordered regions lie at residues 25–67 and 146–171; these read AEHG…ELEK and RERL…QEEL. The region spanning 57–109 is the bHLH domain; it reads SGRSVHNELEKRRRAQLKRCLERLKQQMPLGADCARYTTLSLLRRARMHIQKL.

Efficient DNA binding requires dimerization with another bHLH protein. Binds DNA as a heterodimer with MAX. Interacts with SIN3A AND SIN3B. Interacts with RNF17.

Its subcellular location is the nucleus. Functionally, transcriptional repressor. Binds with MAX to form a sequence-specific DNA-binding protein complex which recognizes the core sequence 5'-CAC[GA]TG-3'. Antagonizes MYC transcriptional activity by competing for MAX and suppresses MYC dependent cell transformation. The chain is Max dimerization protein 3 (MXD3) from Homo sapiens (Human).